Consider the following 90-residue polypeptide: LYR motif-containing protein 2 (90 aa).

The transit peptide at 1–19 (MASSRLPASALTLKQFIQR) directs the protein to the mitochondrion.

Belongs to the complex I LYR family.

It localises to the mitochondrion. Its function is as follows. Involved in efficient integration of the N-module into mitochondrial respiratory chain complex I. This chain is LYR motif-containing protein 2 (lyrm2), found in Salmo salar (Atlantic salmon).